Here is a 254-residue protein sequence, read N- to C-terminus: Dihydroorotate dehydrogenase B (NAD(+)), electron transfer subunit (254 aa).

The FAD-binding FR-type domain maps to 1-99 (MLQTEMKVIQ…LGPLGKGFDL (99 aa)). FAD contacts are provided by residues 50 to 53 (RPIS), 67 to 69 (LYR), and 74 to 75 (GT). Positions 218, 223, 226, and 241 each coordinate [2Fe-2S] cluster.

It belongs to the PyrK family. Heterotetramer of 2 PyrK and 2 PyrD type B subunits. The cofactor is [2Fe-2S] cluster. It depends on FAD as a cofactor.

The protein operates within pyrimidine metabolism; UMP biosynthesis via de novo pathway; orotate from (S)-dihydroorotate (NAD(+) route): step 1/1. In terms of biological role, responsible for channeling the electrons from the oxidation of dihydroorotate from the FMN redox center in the PyrD type B subunit to the ultimate electron acceptor NAD(+). The chain is Dihydroorotate dehydrogenase B (NAD(+)), electron transfer subunit from Listeria innocua serovar 6a (strain ATCC BAA-680 / CLIP 11262).